Reading from the N-terminus, the 129-residue chain is Large ribosomal subunit protein bL21 (129 aa).

It belongs to the bacterial ribosomal protein bL21 family. In terms of assembly, part of the 50S ribosomal subunit. Contacts protein L20.

Its function is as follows. This protein binds to 23S rRNA in the presence of protein L20. The polypeptide is Large ribosomal subunit protein bL21 (Prochlorococcus marinus (strain MIT 9313)).